We begin with the raw amino-acid sequence, 286 residues long: D-tagatose-1,6-bisphosphate aldolase subunit KbaY (286 aa).

The active-site Proton donor is the D82. Zn(2+)-binding residues include H83 and H180. G181 contributes to the dihydroxyacetone phosphate binding site. H208 is a binding site for Zn(2+). Dihydroxyacetone phosphate contacts are provided by residues 209-211 (GAS) and 230-233 (NVAT).

It belongs to the class II fructose-bisphosphate aldolase family. TagBP aldolase KbaY subfamily. In terms of assembly, homotetramer. Forms a complex with KbaZ. Requires Zn(2+) as cofactor.

The enzyme catalyses D-tagatofuranose 1,6-bisphosphate = D-glyceraldehyde 3-phosphate + dihydroxyacetone phosphate. It functions in the pathway carbohydrate metabolism; D-tagatose 6-phosphate degradation; D-glyceraldehyde 3-phosphate and glycerone phosphate from D-tagatose 6-phosphate: step 2/2. Its function is as follows. Catalytic subunit of the tagatose-1,6-bisphosphate aldolase KbaYZ, which catalyzes the reversible aldol condensation of dihydroxyacetone phosphate (DHAP or glycerone-phosphate) with glyceraldehyde 3-phosphate (G3P) to produce tagatose 1,6-bisphosphate (TBP). Requires KbaZ subunit for full activity and stability. Is involved in the catabolism of N-acetylgalactosamine and D-galactosamine. This Escherichia coli protein is D-tagatose-1,6-bisphosphate aldolase subunit KbaY (kbaY).